The sequence spans 2715 residues: Chromodomain-helicase-DNA-binding protein 6 (2715 aa).

Over residues 1–11 (MKMKIQKKEKQ) the composition is skewed to basic and acidic residues. Disordered regions lie at residues 1–30 (MKMK…SVNF) and 66–244 (EEAA…QVKR). A required for DNA-dependent ATPase activity region spans residues 1–747 (MKMKIQKKEK…MMELRKCCNH (747 aa)). The span at 12–27 (LSNLKVLNHSPMSDAS) shows a compositional bias: polar residues. Basic and acidic residues predominate over residues 123 to 172 (EPKEPKEPRKAKEPKKAKEHKEPKQKDGAKKARKPREASGTKEAKEKRSC). Chromo domains lie at 292 to 343 (NIIE…KDPR) and 375 to 439 (VEVD…KHVE). One can recognise a Helicase ATP-binding domain in the interval 473 to 647 (LFNWYNRKNC…FSLLNFLEPS (175 aa)). ATP is bound at residue 486–493 (DEMGLGKT). The short motif at 598 to 601 (DEAH) is the DEAH box element. The 170-residue stretch at 787–956 (LIDKLLPKLI…LSKMEVEDLL (170 aa)) folds into the Helicase C-terminal domain. Residues 1318–1390 (KSLSAEQGVT…SDPDKSPWPV (73 aa)) are disordered. A compositionally biased stretch (polar residues) spans 1321–1330 (SAEQGVTDGT). Composition is skewed to basic and acidic residues over residues 1333–1351 (IPER…KVDG) and 1367–1376 (FSEKKDDSRA). Residues 1449 to 1503 (RWTRREQADFYRTVSSFGVVYDQEKKTFDWTQFRIISRLDKKSDESLEQYFYSFV) form the Myb-like domain. Residues 2027–2038 (FENKDDYDRDGN) show a composition bias toward basic and acidic residues. 6 disordered regions span residues 2027 to 2063 (FENK…ITGD), 2116 to 2148 (SQQY…AAEH), 2321 to 2351 (QATL…QAEK), 2373 to 2422 (PGFG…FLPE), 2547 to 2602 (TSTA…PAIT), and 2648 to 2715 (VGLE…NDTN). Residues 2116–2141 (SQQYEPSGTLPTPVLTSSAGSRTSLS) show a composition bias toward polar residues. Low complexity predominate over residues 2329–2346 (PEGPGPATSAPEPATAAS). The span at 2547–2560 (TSTAPASLSSTTKS) shows a compositional bias: low complexity. Composition is skewed to basic and acidic residues over residues 2567–2588 (KTAE…EDKP) and 2706–2715 (ALKDSNNDTN).

Belongs to the SNF2/RAD54 helicase family. Interacts with NFE2L2; involved in activation of the transcription. As to quaternary structure, (Microbial infection) Interacts with the influenza A polymerase complex composed fo PB1, PB2 and PA. In terms of assembly, (Microbial infection) Interacts (via N-terminus) with human papillomavirus protein E8^E2C (via C-terminus); this interaction induces transcriptional repression of the viral genome. In terms of tissue distribution, widely expressed.

It is found in the nucleus. It localises to the nucleoplasm. The enzyme catalyses ATP + H2O = ADP + phosphate + H(+). ATP-dependent chromatin-remodeling factor. Regulates transcription by disrupting nucleosomes in a largely non-sliding manner which strongly increases the accessibility of chromatin; nucleosome disruption requires ATP. Activates transcription of specific genes in response to oxidative stress through interaction with NFE2L2. In terms of biological role, (Microbial infection) Acts as a transcriptional repressor of different viruses including influenza virus or papillomavirus. During influenza virus infection, the viral polymerase complex localizes CHD6 to inactive chromatin where it gets degraded in a proteasome independent-manner. The polypeptide is Chromodomain-helicase-DNA-binding protein 6 (CHD6) (Homo sapiens (Human)).